The sequence spans 307 residues: Malate dehydrogenase (307 aa).

NAD(+) contacts are provided by residues 8-13 (GAGNVG) and Asp32. Positions 81 and 87 each coordinate substrate. NAD(+) is bound by residues Asn94 and 117-119 (VSN). 2 residues coordinate substrate: Asn119 and Arg150. His174 functions as the Proton acceptor in the catalytic mechanism.

It belongs to the LDH/MDH superfamily. MDH type 3 family.

It catalyses the reaction (S)-malate + NAD(+) = oxaloacetate + NADH + H(+). In terms of biological role, catalyzes the reversible oxidation of malate to oxaloacetate. This is Malate dehydrogenase from Dehalococcoides mccartyi (strain ATCC BAA-2266 / KCTC 15142 / 195) (Dehalococcoides ethenogenes (strain 195)).